Consider the following 116-residue polypeptide: Large ribosomal subunit protein uL24 (116 aa).

Belongs to the universal ribosomal protein uL24 family. In terms of assembly, part of the 50S ribosomal subunit.

In terms of biological role, one of two assembly initiator proteins, it binds directly to the 5'-end of the 23S rRNA, where it nucleates assembly of the 50S subunit. Functionally, one of the proteins that surrounds the polypeptide exit tunnel on the outside of the subunit. The polypeptide is Large ribosomal subunit protein uL24 (Protochlamydia amoebophila (strain UWE25)).